A 212-amino-acid polypeptide reads, in one-letter code: Translation initiation factor IF-3 (212 aa).

It belongs to the IF-3 family. In terms of assembly, monomer.

The protein resides in the cytoplasm. In terms of biological role, IF-3 binds to the 30S ribosomal subunit and shifts the equilibrium between 70S ribosomes and their 50S and 30S subunits in favor of the free subunits, thus enhancing the availability of 30S subunits on which protein synthesis initiation begins. In Synechococcus sp. (strain CC9311), this protein is Translation initiation factor IF-3.